The chain runs to 169 residues: E1B protein, small T-antigen (169 aa).

Residues 147–169 (GSVVEEEQGEEHLARDSDDPFFD) are disordered. The span at 156–169 (EEHLARDSDDPFFD) shows a compositional bias: basic and acidic residues.

This sequence belongs to the adenoviridae E1B 19 kDa protein family.

In Canine adenovirus serotype 1 (strain Glaxo) (CAdV-1), this protein is E1B protein, small T-antigen.